Here is a 382-residue protein sequence, read N- to C-terminus: Polyadenylate-binding protein 5 (382 aa).

4 RRM domains span residues 18-96 (AALY…WSQP), 106-182 (GNIF…RFKF), 199-276 (TNVF…RAQK), and 302-378 (VPIY…LGQA).

The protein resides in the cytoplasm. Its function is as follows. Binds the poly(A) tail of mRNA. May be involved in cytoplasmic regulatory processes of mRNA metabolism. Can probably bind to cytoplasmic RNA sequences other than poly(A) in vivo. The polypeptide is Polyadenylate-binding protein 5 (PABPC5) (Gorilla gorilla gorilla (Western lowland gorilla)).